We begin with the raw amino-acid sequence, 347 residues long: NADH-quinone oxidoreductase subunit H 1 (347 aa).

9 helical membrane passes run 14–34 (IMIGQSLLLLVALLLFIAYVL), 50–70 (PNVVGPFGLFQSFADLLKFVF), 83–103 (IFLLAPLVSVTLALAAWAVIP), 115–135 (VGILFVFAISSLEVYGIIMGG), 161–181 (IGFVIVTVLLCVGSLNLTDIV), 198–218 (FLDWHWLSLFPMFIIFFISAL), 258–278 (AICLMCALTTILFLGGWLPPV), 286–306 (VPGIIWFVLKASLVFFMFAMV), and 321–341 (LGWKVFLPLSLAMVVIVAFVL).

The protein belongs to the complex I subunit 1 family. In terms of assembly, NDH-1 is composed of 14 different subunits. Subunits NuoA, H, J, K, L, M, N constitute the membrane sector of the complex.

It is found in the cell inner membrane. It carries out the reaction a quinone + NADH + 5 H(+)(in) = a quinol + NAD(+) + 4 H(+)(out). Functionally, NDH-1 shuttles electrons from NADH, via FMN and iron-sulfur (Fe-S) centers, to quinones in the respiratory chain. The immediate electron acceptor for the enzyme in this species is believed to be ubiquinone. Couples the redox reaction to proton translocation (for every two electrons transferred, four hydrogen ions are translocated across the cytoplasmic membrane), and thus conserves the redox energy in a proton gradient. This subunit may bind ubiquinone. The chain is NADH-quinone oxidoreductase subunit H 1 from Rhizobium meliloti (strain 1021) (Ensifer meliloti).